Reading from the N-terminus, the 281-residue chain is 33 kDa chaperonin (281 aa).

2 disulfides stabilise this stretch: C229-C231 and C262-C265.

This sequence belongs to the HSP33 family. Under oxidizing conditions two disulfide bonds are formed involving the reactive cysteines. Under reducing conditions zinc is bound to the reactive cysteines and the protein is inactive.

The protein localises to the cytoplasm. In terms of biological role, redox regulated molecular chaperone. Protects both thermally unfolding and oxidatively damaged proteins from irreversible aggregation. Plays an important role in the bacterial defense system toward oxidative stress. The chain is 33 kDa chaperonin from Pseudoalteromonas translucida (strain TAC 125).